The sequence spans 511 residues: Tryptophan 5-halogenase PyrH (511 aa).

FAD contacts are provided by G10, A13, S36, V39, I42, V44, and A47. S50 contributes to the L-tryptophan binding site. K75 is a catalytic residue. 3 residues coordinate L-tryptophan: P93, Q160, and Q163. The FAD site is built by V195 and L345. T356 and G357 together coordinate chloride. I358 contacts FAD. L-tryptophan contacts are provided by G450 and Y454.

The protein belongs to the flavin-dependent halogenase family. Bacterial tryptophan halogenase subfamily. In terms of assembly, homodimer.

It catalyses the reaction L-tryptophan + FADH2 + chloride + O2 = 5-chloro-L-tryptophan + FAD + 2 H2O. The protein operates within antibiotic biosynthesis. In terms of biological role, involved in the biosynthesis of the antibiotic compound pyrroindomycin B. Catalyzes the chlorination of tryptophan (Trp) at C5 position to yield 5-chloro-L-tryptophan. It is also able to use bromide ions to generate monobrominated Trp, but the brominating activity is only about 75% of the chlorinating activity. This is Tryptophan 5-halogenase PyrH from Streptomyces rugosporus.